The sequence spans 355 residues: Putative inositol monophosphatase 3 (355 aa).

Residues 16-36 form a helical membrane-spanning segment; the sequence is VPATIFAILLTIVLVYFLNFH. Residues E127, D167, L169, D170, and D292 each contribute to the Mg(2+) site. E127 serves as a coordination point for substrate. Substrate is bound by residues 169 to 172 and D292; that span reads LDAT.

Belongs to the inositol monophosphatase superfamily. The cofactor is Mg(2+).

It localises to the membrane. The catalysed reaction is a myo-inositol phosphate + H2O = myo-inositol + phosphate. The protein operates within polyol metabolism; myo-inositol biosynthesis; myo-inositol from D-glucose 6-phosphate: step 2/2. The chain is Putative inositol monophosphatase 3 from Drosophila pseudoobscura pseudoobscura (Fruit fly).